The chain runs to 443 residues: Cobyrinate a,c-diamide synthase (443 aa).

Residues lysine 244 to arginine 435 form the GATase cobBQ-type domain. Catalysis depends on cysteine 327, which acts as the Nucleophile.

This sequence belongs to the CobB/CbiA family. The cofactor is Mg(2+).

The enzyme catalyses cob(II)yrinate + 2 L-glutamine + 2 ATP + 2 H2O = cob(II)yrinate a,c diamide + 2 L-glutamate + 2 ADP + 2 phosphate + 2 H(+). It participates in cofactor biosynthesis; adenosylcobalamin biosynthesis; cob(II)yrinate a,c-diamide from sirohydrochlorin (anaerobic route): step 10/10. In terms of biological role, catalyzes the ATP-dependent amidation of the two carboxylate groups at positions a and c of cobyrinate, using either L-glutamine or ammonia as the nitrogen source. The sequence is that of Cobyrinate a,c-diamide synthase from Thermoplasma acidophilum (strain ATCC 25905 / DSM 1728 / JCM 9062 / NBRC 15155 / AMRC-C165).